Consider the following 108-residue polypeptide: Sperm-egg fusion protein LLCFC1 (108 aa).

The N-terminal stretch at M1–T30 is a signal peptide. Over residues G39–S49 the composition is skewed to basic and acidic residues. The disordered stretch occupies residues G39–S64.

Detected in testicular germ cells and spermatozoa (at protein level). Abundantly expressed in testis.

The protein localises to the secreted. Functionally, sperm protein required for fusion of sperm with the egg membrane during fertilization. The sequence is that of Sperm-egg fusion protein LLCFC1 from Mus musculus (Mouse).